The chain runs to 743 residues: Inhibitor of nuclear factor kappa-B kinase subunit alpha (743 aa).

The region spanning 15 to 300 is the Protein kinase domain; sequence WDMKDRLGTG…IDCGRPRCFM (286 aa). Residues 21–29 and K44 each bind ATP; that span reads LGTGGFGNV. D144 acts as the Proton acceptor in catalysis. A leucine-zipper region spans residues 453-474; it reads LLRFNTNLTKMKNTMVSASQQL. Residues 736-741 are NEMO-binding; the sequence is MDFSWL.

It belongs to the protein kinase superfamily. Ser/Thr protein kinase family. I-kappa-B kinase subfamily.

It is found in the cytoplasm. The protein resides in the nucleus. It carries out the reaction L-seryl-[I-kappa-B protein] + ATP = O-phospho-L-seryl-[I-kappa-B protein] + ADP + H(+). Its activity is regulated as follows. Activated when phosphorylated and inactivated when dephosphorylated. Its function is as follows. Phosphorylates inhibitors of NF-kappa-B thus leading to the dissociation of the inhibitor/NF-kappa-B complex and ultimately the degradation of the inhibitor. Phosphorylates 'Ser-10' of histone H3 at NF-kappa-B-regulated promoters during inflammatory responses triggered by cytokines. The sequence is that of Inhibitor of nuclear factor kappa-B kinase subunit alpha (chuk) from Xenopus laevis (African clawed frog).